Reading from the N-terminus, the 270-residue chain is Phosphatidylglycerol--prolipoprotein diacylglyceryl transferase (270 aa).

Helical transmembrane passes span 19 to 39, 56 to 76, 92 to 112, and 116 to 136; these read FPVY…LWLA, LVLI…VIFE, QGGL…VLFA, and GVSF…GQAI. An a 1,2-diacyl-sn-glycero-3-phospho-(1'-sn-glycerol)-binding site is contributed by Arg138. 3 consecutive transmembrane segments (helical) span residues 178–198, 206–226, and 236–256; these read HPTF…LLAL, GELF…VEGL, and LRIA…FIIV.

The protein belongs to the Lgt family.

It localises to the cell membrane. The enzyme catalyses L-cysteinyl-[prolipoprotein] + a 1,2-diacyl-sn-glycero-3-phospho-(1'-sn-glycerol) = an S-1,2-diacyl-sn-glyceryl-L-cysteinyl-[prolipoprotein] + sn-glycerol 1-phosphate + H(+). The protein operates within protein modification; lipoprotein biosynthesis (diacylglyceryl transfer). In terms of biological role, catalyzes the transfer of the diacylglyceryl group from phosphatidylglycerol to the sulfhydryl group of the N-terminal cysteine of a prolipoprotein, the first step in the formation of mature lipoproteins. The sequence is that of Phosphatidylglycerol--prolipoprotein diacylglyceryl transferase from Bacillus cereus (strain B4264).